The following is a 235-amino-acid chain: Aspartate/glutamate leucyltransferase (235 aa).

The protein belongs to the R-transferase family. Bpt subfamily.

Its subcellular location is the cytoplasm. It catalyses the reaction N-terminal L-glutamyl-[protein] + L-leucyl-tRNA(Leu) = N-terminal L-leucyl-L-glutamyl-[protein] + tRNA(Leu) + H(+). It carries out the reaction N-terminal L-aspartyl-[protein] + L-leucyl-tRNA(Leu) = N-terminal L-leucyl-L-aspartyl-[protein] + tRNA(Leu) + H(+). Its function is as follows. Functions in the N-end rule pathway of protein degradation where it conjugates Leu from its aminoacyl-tRNA to the N-termini of proteins containing an N-terminal aspartate or glutamate. This chain is Aspartate/glutamate leucyltransferase, found in Pseudomonas aeruginosa (strain LESB58).